The chain runs to 328 residues: DNA-directed RNA polymerase subunit alpha 2 (328 aa).

The tract at residues 1–234 is alpha N-terminal domain (alpha-NTD); sequence MQGSVIEFLK…EQLDAFVDLR (234 aa). The alpha C-terminal domain (alpha-CTD) stretch occupies residues 248-328; sequence FDPILLRPVD…NWPPASLSED (81 aa).

This sequence belongs to the RNA polymerase alpha chain family. In terms of assembly, homodimer. The RNAP catalytic core consists of 2 alpha, 1 beta, 1 beta' and 1 omega subunit. When a sigma factor is associated with the core the holoenzyme is formed, which can initiate transcription.

It catalyses the reaction RNA(n) + a ribonucleoside 5'-triphosphate = RNA(n+1) + diphosphate. Its function is as follows. DNA-dependent RNA polymerase catalyzes the transcription of DNA into RNA using the four ribonucleoside triphosphates as substrates. The chain is DNA-directed RNA polymerase subunit alpha 2 from Psychromonas ingrahamii (strain DSM 17664 / CCUG 51855 / 37).